A 130-amino-acid chain; its full sequence is ATP synthase epsilon chain (130 aa).

This sequence belongs to the ATPase epsilon chain family. F-type ATPases have 2 components, CF(1) - the catalytic core - and CF(0) - the membrane proton channel. CF(1) has five subunits: alpha(3), beta(3), gamma(1), delta(1), epsilon(1). CF(0) has three main subunits: a, b and c.

Its subcellular location is the cell inner membrane. Its function is as follows. Produces ATP from ADP in the presence of a proton gradient across the membrane. The polypeptide is ATP synthase epsilon chain (Campylobacter hominis (strain ATCC BAA-381 / DSM 21671 / CCUG 45161 / LMG 19568 / NCTC 13146 / CH001A)).